A 72-amino-acid chain; its full sequence is Translation initiation factor IF-1 (72 aa).

The 72-residue stretch at 1–72 (MAKDDVIEVD…DKGRITYRHK (72 aa)) folds into the S1-like domain.

The protein belongs to the IF-1 family. As to quaternary structure, component of the 30S ribosomal translation pre-initiation complex which assembles on the 30S ribosome in the order IF-2 and IF-3, IF-1 and N-formylmethionyl-tRNA(fMet); mRNA recruitment can occur at any time during PIC assembly.

The protein resides in the cytoplasm. Functionally, one of the essential components for the initiation of protein synthesis. Stabilizes the binding of IF-2 and IF-3 on the 30S subunit to which N-formylmethionyl-tRNA(fMet) subsequently binds. Helps modulate mRNA selection, yielding the 30S pre-initiation complex (PIC). Upon addition of the 50S ribosomal subunit IF-1, IF-2 and IF-3 are released leaving the mature 70S translation initiation complex. The polypeptide is Translation initiation factor IF-1 (Helicobacter hepaticus (strain ATCC 51449 / 3B1)).